A 728-amino-acid chain; its full sequence is Catalase-peroxidase 1 (728 aa).

A signal peptide spans 1–22 (MDKTQSSQGKCPVMHGANSAVA). A cross-link (tryptophyl-tyrosyl-methioninium (Trp-Tyr) (with M-251)) is located at residues 97–225 (WHSAGTYRVA…LAAVMMGLIY (129 aa)). His-98 functions as the Proton acceptor in the catalytic mechanism. Residues 225–251 (YVNPEGVDGKPDPLRTAQDVRVTFARM) constitute a cross-link (tryptophyl-tyrosyl-methioninium (Tyr-Met) (with W-97)). A heme b-binding site is contributed by His-266.

Belongs to the peroxidase family. Peroxidase/catalase subfamily. In terms of assembly, homodimer or homotetramer. The cofactor is heme b. Post-translationally, formation of the three residue Trp-Tyr-Met cross-link is important for the catalase, but not the peroxidase activity of the enzyme.

It carries out the reaction H2O2 + AH2 = A + 2 H2O. It catalyses the reaction 2 H2O2 = O2 + 2 H2O. Functionally, bifunctional enzyme with both catalase and broad-spectrum peroxidase activity. In Shewanella sp. (strain MR-4), this protein is Catalase-peroxidase 1.